The following is an 892-amino-acid chain: Alpha-actinin-1 (892 aa).

At M1 the chain carries N-acetylmethionine. Positions 1 to 247 (MDHYDSQQTN…IMTYVSSFYH (247 aa)) are actin-binding. At S6 the chain carries Phosphoserine. A Phosphotyrosine; by FAK1 modification is found at Y12. Calponin-homology (CH) domains lie at 31–135 (KQQR…LRFA) and 144–250 (TSAK…HAFS). K95 and K195 each carry N6-acetyllysine. Spectrin repeat units lie at residues 274 to 384 (QLME…WLLN), 394 to 499 (HLAE…ALER), 509 to 620 (QLYL…ALTE), and 630 to 733 (RLRK…EVEN). The interval 274–733 (QLMEDYEKLA…IARTINEVEN (460 aa)) is interaction with DDN. S471 bears the Phosphoserine mark. N6-acetyllysine is present on K676. S677 carries the phosphoserine modification. EF-hand domains are found at residues 746 to 781 (EQMNEFRASFNHFDRDHSGTLGPEEFKACLISLGYD) and 787 to 822 (QGEAEFARIMSIVDPNRLGVVTFQAFIDFMSRETAD). Residues D759, D761, S763, T765, and E770 each coordinate Ca(2+). S890 is modified (phosphoserine).

Belongs to the alpha-actinin family. In terms of assembly, homodimer; antiparallel. Interacts with MYOZ2, TTID and LPP. Interacts with DDN. Interacts with PSD. Interacts with MICALL2. Interacts with DNM2 and CTTN. Interacts with PDLIM1. Interacts with PDLIM2. Interacts with PDLIM4 (via PDZ domain). Interacts with IGSF8.

The protein localises to the cytoplasm. It is found in the cytoskeleton. Its subcellular location is the myofibril. The protein resides in the sarcomere. It localises to the z line. The protein localises to the cell membrane. It is found in the cell junction. Its subcellular location is the cell projection. The protein resides in the ruffle. F-actin cross-linking protein which is thought to anchor actin to a variety of intracellular structures. Association with IGSF8 regulates the immune synapse formation and is required for efficient T-cell activation. The polypeptide is Alpha-actinin-1 (ACTN1) (Bos taurus (Bovine)).